A 321-amino-acid polypeptide reads, in one-letter code: Lipoyl synthase (321 aa).

Positions 68, 73, 79, 94, 98, 101, and 308 each coordinate [4Fe-4S] cluster. The Radical SAM core domain maps to 80–297 (FNHGTATFMI…KEEAMAMGFT (218 aa)).

This sequence belongs to the radical SAM superfamily. Lipoyl synthase family. [4Fe-4S] cluster serves as cofactor.

It is found in the cytoplasm. It carries out the reaction [[Fe-S] cluster scaffold protein carrying a second [4Fe-4S](2+) cluster] + N(6)-octanoyl-L-lysyl-[protein] + 2 oxidized [2Fe-2S]-[ferredoxin] + 2 S-adenosyl-L-methionine + 4 H(+) = [[Fe-S] cluster scaffold protein] + N(6)-[(R)-dihydrolipoyl]-L-lysyl-[protein] + 4 Fe(3+) + 2 hydrogen sulfide + 2 5'-deoxyadenosine + 2 L-methionine + 2 reduced [2Fe-2S]-[ferredoxin]. It participates in protein modification; protein lipoylation via endogenous pathway; protein N(6)-(lipoyl)lysine from octanoyl-[acyl-carrier-protein]: step 2/2. Its function is as follows. Catalyzes the radical-mediated insertion of two sulfur atoms into the C-6 and C-8 positions of the octanoyl moiety bound to the lipoyl domains of lipoate-dependent enzymes, thereby converting the octanoylated domains into lipoylated derivatives. The chain is Lipoyl synthase from Serratia proteamaculans (strain 568).